A 348-amino-acid polypeptide reads, in one-letter code: Histidinol-phosphate aminotransferase (348 aa).

Lysine 207 is modified (N6-(pyridoxal phosphate)lysine).

The protein belongs to the class-II pyridoxal-phosphate-dependent aminotransferase family. Histidinol-phosphate aminotransferase subfamily. In terms of assembly, homodimer. The cofactor is pyridoxal 5'-phosphate.

The enzyme catalyses L-histidinol phosphate + 2-oxoglutarate = 3-(imidazol-4-yl)-2-oxopropyl phosphate + L-glutamate. The protein operates within amino-acid biosynthesis; L-histidine biosynthesis; L-histidine from 5-phospho-alpha-D-ribose 1-diphosphate: step 7/9. In Rippkaea orientalis (strain PCC 8801 / RF-1) (Cyanothece sp. (strain PCC 8801)), this protein is Histidinol-phosphate aminotransferase.